The chain runs to 152 residues: Putative toxin MJ1304 (152 aa).

Residues 15 to 135 (IKRAEEDLEV…EECLKDAENV (121 aa)) enclose the HEPN domain.

Putative toxin component of a putative type VII toxin-antitoxin (TA) system. Its cognate antitoxin might be MJ1305. In Methanocaldococcus jannaschii (strain ATCC 43067 / DSM 2661 / JAL-1 / JCM 10045 / NBRC 100440) (Methanococcus jannaschii), this protein is Putative toxin MJ1304.